Consider the following 413-residue polypeptide: Tryptophan synthase beta chain (413 aa).

At Lys107 the chain carries N6-(pyridoxal phosphate)lysine.

This sequence belongs to the TrpB family. As to quaternary structure, tetramer of two alpha and two beta chains. Requires pyridoxal 5'-phosphate as cofactor.

The enzyme catalyses (1S,2R)-1-C-(indol-3-yl)glycerol 3-phosphate + L-serine = D-glyceraldehyde 3-phosphate + L-tryptophan + H2O. The protein operates within amino-acid biosynthesis; L-tryptophan biosynthesis; L-tryptophan from chorismate: step 5/5. Its function is as follows. The beta subunit is responsible for the synthesis of L-tryptophan from indole and L-serine. The protein is Tryptophan synthase beta chain of Trichormus variabilis (strain ATCC 29413 / PCC 7937) (Anabaena variabilis).